The chain runs to 335 residues: Tetraacyldisaccharide 4'-kinase (335 aa).

58–65 (TVGGVGKT) provides a ligand contact to ATP.

This sequence belongs to the LpxK family.

The catalysed reaction is a lipid A disaccharide + ATP = a lipid IVA + ADP + H(+). It participates in glycolipid biosynthesis; lipid IV(A) biosynthesis; lipid IV(A) from (3R)-3-hydroxytetradecanoyl-[acyl-carrier-protein] and UDP-N-acetyl-alpha-D-glucosamine: step 6/6. Transfers the gamma-phosphate of ATP to the 4'-position of a tetraacyldisaccharide 1-phosphate intermediate (termed DS-1-P) to form tetraacyldisaccharide 1,4'-bis-phosphate (lipid IVA). The protein is Tetraacyldisaccharide 4'-kinase of Caulobacter sp. (strain K31).